Reading from the N-terminus, the 537-residue chain is Lysosomal cobalamin transport escort protein LMBD1 (537 aa).

Residues 1-7 lie on the Extracellular side of the membrane; it reads MAAAAAE. A helical membrane pass occupies residues 8–28; sequence LVIGWCIFGLLLLAILAFCWV. The Cytoplasmic segment spans residues 29–47; that stretch reads YVRKYQSQRESEVVSTVTA. The helical transmembrane segment at 48 to 68 threads the bilayer; the sequence is IFSLAVALITSALLPVDIFLV. The Extracellular portion of the chain corresponds to 69 to 97; that stretch reads SYMKNQNGTFKDWADANVTVQIENTVLYG. 2 N-linked (GlcNAc...) asparagine glycosylation sites follow: asparagine 75 and asparagine 85. A helical membrane pass occupies residues 98–118; the sequence is YYTLYSVILFCVFFWIPFVYF. At 119–141 the chain is on the cytoplasmic side; it reads YYEEKDEDDASKCTQIKTALKYT. Residues 142–162 traverse the membrane as a helical segment; sequence LGFVVICALLLLVGAFVPLHL. Residues 163-185 are Extracellular-facing; the sequence is PNNNNSTEWEKVKLLFEDLGTGQ. 2 N-linked (GlcNAc...) asparagine glycosylation sites follow: asparagine 166 and asparagine 167. Residues 186-206 form a helical membrane-spanning segment; sequence GLAALSFSISSLTLIGMLAAI. Over 207–302 the chain is Cytoplasmic; the sequence is TYTAYGMSAL…KFCGALRPLK (96 aa). The short motif at 229 to 232 is the YERL motif; mediates interaction with adapter protein complex 2 and is essential for its function in clathrin-mediated endocytosis of INSR element; that stretch reads YERL. At threonine 235 the chain carries Phosphothreonine. The WTKF motif; mediates interaction with adapter protein complex 2 and is essential for its function in clathrin-mediated endocytosis of INSR motif lies at 291–294; it reads WTKF. Residues 303 to 323 traverse the membrane as a helical segment; that stretch reads IIWGIFFILVALLFVISLFLS. Over 324–361 the chain is Extracellular; sequence NLDKALHSAGIDSGFIIFGTNLSNPLNMLLPLLQTVFP. The N-linked (GlcNAc...) asparagine glycan is linked to asparagine 344. Residues 362–382 traverse the membrane as a helical segment; the sequence is LDYILITIIIMYFIFTSMAGI. The Cytoplasmic portion of the chain corresponds to 383 to 405; it reads RNIGIWFFWIRLYKIRRGRTRPQ. Residues 406–426 form a helical membrane-spanning segment; the sequence is ALLFLCMILLLIVLHTSYMIY. Residues 427 to 483 lie on the Extracellular side of the membrane; it reads SLAPQYVMYGSQNYLIESNITSDAHKGNSTLAVPKRCDADAPKDQCTVTRTYIFLHK. 2 N-linked (GlcNAc...) asparagine glycosylation sites follow: asparagine 445 and asparagine 454. The chain crosses the membrane as a helical span at residues 484 to 504; the sequence is FWFFSAAYYFGNWAFLVVFLI. The Cytoplasmic segment spans residues 505–537; it reads GLIVSCCKGKKSVIEGVDEDSDLSDDEPSAYSA. A phosphoserine mark is found at serine 525 and serine 528.

Belongs to the LIMR family. LMBRD1 subfamily. As to quaternary structure, interacts with ABCD4; this interaction induces the translocation of ABCD4 from the endoplasmic reticulum to the lysosome. Interacts with ABCD4 and MMACHC; this interaction ensures the transport of cobalamin from the lysosome to the cytoplasm. Interacts with INSR, adapter protein complex 2 and clathrin heavy chain. In terms of processing, N-glycosylated.

It localises to the endoplasmic reticulum membrane. It is found in the lysosome membrane. The protein localises to the cell membrane. The protein resides in the cytoplasmic vesicle. Its subcellular location is the clathrin-coated vesicle. In terms of biological role, lysosomal membrane chaperone required to export cobalamin (vitamin B12) from the lysosome to the cytosol, allowing its conversion to cofactors. Targets ABCD4 transporter from the endoplasmic reticulum to the lysosome. Then forms a complex with lysosomal ABCD4 and cytoplasmic MMACHC to transport cobalamin across the lysosomal membrane. Acts as an adapter protein which plays an important role in mediating and regulating the internalization of the insulin receptor (INSR). Involved in clathrin-mediated endocytosis of INSR via its interaction with adapter protein complex 2. Essential for the initiation of gastrulation and early formation of mesoderm structures during embryogenesis. This Mus musculus (Mouse) protein is Lysosomal cobalamin transport escort protein LMBD1.